We begin with the raw amino-acid sequence, 150 residues long: uncharacterized protein (150 aa).

The protein belongs to the aspartate/glutamate racemases family.

This is an uncharacterized protein from Pectobacterium carotovorum subsp. carotovorum (Erwinia carotovora subsp. carotovora).